The primary structure comprises 713 residues: Protein-glucosylgalactosylhydroxylysine glucosidase (713 aa).

The signal sequence occupies residues 1-21; that stretch reads MIINSQEYLQPPQWWNERVEA. N-linked (GlcNAc...) asparagine glycans are attached at residues N104, N160, N171, N186, and N283. Residue 317–318 participates in substrate binding; the sequence is WD. A glycan (N-linked (GlcNAc...) asparagine) is linked at N361. Catalysis depends on E451, which acts as the Proton donor. 2 N-linked (GlcNAc...) asparagine glycosylation sites follow: N457 and N481. Residue 521-522 participates in substrate binding; that stretch reads KQ. N535, N576, and N662 each carry an N-linked (GlcNAc...) asparagine glycan.

The protein belongs to the glycosyl hydrolase 65 family.

The protein resides in the secreted. It catalyses the reaction (5R)-5-O-[alpha-D-glucosyl-(1-&gt;2)-beta-D-galactosyl]-5-hydroxy-L-lysyl-[collagen] + H2O = (5R)-5-O-(beta-D-galactosyl)-5-hydroxy-L-lysyl-[collagen] + D-glucose. In terms of biological role, catalyzes the hydrolysis of glucose from the disaccharide unit linked to hydroxylysine residues of collagen and collagen-like proteins. This is Protein-glucosylgalactosylhydroxylysine glucosidase from Dictyostelium discoideum (Social amoeba).